The following is a 245-amino-acid chain: MKDVIVIKIGGVAAKKLSDKFIKQMQEWIAAGKKIVVVHGGGLVINQLMKERQLPTRKVKGLRVTAKSDLPIIQQALLGQVGRTLTQELNYSDIESLQLVSHLGKTVSADFIDKDVYGYVGQVKAIQTAYLEQLLAADIVPVLASLGENAAGELLNINADYLAAAVASSLQAEKLILMTDIEGVLEDKKVLPQILTSQVSKKIQTGVIKGGMIPKIESAVQTVLSGVGQVLIGDNLLTGTLIAEG.

Substrate contacts are provided by residues 41-42 (GG), arginine 63, and asparagine 156.

It belongs to the acetylglutamate kinase family. ArgB subfamily.

It is found in the cytoplasm. The enzyme catalyses N-acetyl-L-glutamate + ATP = N-acetyl-L-glutamyl 5-phosphate + ADP. It functions in the pathway amino-acid biosynthesis; L-arginine biosynthesis; N(2)-acetyl-L-ornithine from L-glutamate: step 2/4. Functionally, catalyzes the ATP-dependent phosphorylation of N-acetyl-L-glutamate. This is Acetylglutamate kinase from Streptococcus gordonii (strain Challis / ATCC 35105 / BCRC 15272 / CH1 / DL1 / V288).